A 540-amino-acid polypeptide reads, in one-letter code: Chaperonin GroEL (540 aa).

ATP contacts are provided by residues 29-32 (TIGP), 86-90 (DGTTT), glycine 413, 476-478 (NAA), and aspartate 492.

Belongs to the chaperonin (HSP60) family. In terms of assembly, forms a cylinder of 14 subunits composed of two heptameric rings stacked back-to-back. Interacts with the co-chaperonin GroES.

The protein resides in the cytoplasm. The enzyme catalyses ATP + H2O + a folded polypeptide = ADP + phosphate + an unfolded polypeptide.. Its function is as follows. Together with its co-chaperonin GroES, plays an essential role in assisting protein folding. The GroEL-GroES system forms a nano-cage that allows encapsulation of the non-native substrate proteins and provides a physical environment optimized to promote and accelerate protein folding. This chain is Chaperonin GroEL, found in Staphylococcus carnosus (strain TM300).